A 630-amino-acid chain; its full sequence is Ribonucleoside-diphosphate reductase large subunit (630 aa).

Residues Ser-67, 82 to 83, Gly-111, 317 to 321, and 459 to 463 contribute to the substrate site; these read AC, NLCSE, and PNATS. Cysteines 83 and 334 form a disulfide. Asn-317 functions as the Proton acceptor in the catalytic mechanism. Cys-319 serves as the catalytic Cysteine radical intermediate. Glu-321 acts as the Proton acceptor in catalysis.

The protein belongs to the ribonucleoside diphosphate reductase large chain family. Heterotetramer composed of a homodimer of the large subunit (R1) and a homodimer of the small subunit (R2). Larger multisubunit protein complex are also active, composed of (R1)n(R2)n.

The enzyme catalyses a 2'-deoxyribonucleoside 5'-diphosphate + [thioredoxin]-disulfide + H2O = a ribonucleoside 5'-diphosphate + [thioredoxin]-dithiol. Its activity is regulated as follows. Under complex allosteric control mediated by deoxynucleoside triphosphates and ATP binding. The type of nucleotide bound at the specificity site determines substrate preference. It seems probable that ATP makes the enzyme reduce CDP and UDP, dGTP favors ADP reduction and dTTP favors GDP reduction. Functionally, ribonucleoside-diphosphate reductase holoenzyme provides the precursors necessary for viral DNA synthesis. Allows virus growth in non-dividing cells. Catalyzes the biosynthesis of deoxyribonucleotides from the corresponding ribonucleotides. This is Ribonucleoside-diphosphate reductase large subunit from Aedes vexans (Inland floodwater mosquito).